The primary structure comprises 446 residues: DNA repair protein RadA (446 aa).

The C4-type zinc finger occupies 10–27 (CSNCGNTSPKWSGQCFDC). 91–98 (GDPGIGKS) is a binding site for ATP. The RadA KNRFG motif signature appears at 250–254 (KNRFG). Positions 349-446 (EVYLSIAGGL…HLKDLKEIIR (98 aa)) are lon-protease-like.

The protein belongs to the RecA family. RadA subfamily.

Its function is as follows. DNA-dependent ATPase involved in processing of recombination intermediates, plays a role in repairing DNA breaks. Stimulates the branch migration of RecA-mediated strand transfer reactions, allowing the 3' invading strand to extend heteroduplex DNA faster. Binds ssDNA in the presence of ADP but not other nucleotides, has ATPase activity that is stimulated by ssDNA and various branched DNA structures, but inhibited by SSB. Does not have RecA's homology-searching function. In Rickettsia felis (strain ATCC VR-1525 / URRWXCal2) (Rickettsia azadi), this protein is DNA repair protein RadA.